A 119-amino-acid chain; its full sequence is Ribonuclease P protein component (119 aa).

The protein belongs to the RnpA family. As to quaternary structure, consists of a catalytic RNA component (M1 or rnpB) and a protein subunit.

The enzyme catalyses Endonucleolytic cleavage of RNA, removing 5'-extranucleotides from tRNA precursor.. Its function is as follows. RNaseP catalyzes the removal of the 5'-leader sequence from pre-tRNA to produce the mature 5'-terminus. It can also cleave other RNA substrates such as 4.5S RNA. The protein component plays an auxiliary but essential role in vivo by binding to the 5'-leader sequence and broadening the substrate specificity of the ribozyme. This chain is Ribonuclease P protein component, found in Bacillus pumilus (strain SAFR-032).